We begin with the raw amino-acid sequence, 396 residues long: Putative nickel insertion protein (396 aa).

The protein belongs to the LarC family.

The protein is Putative nickel insertion protein of Methanosarcina acetivorans (strain ATCC 35395 / DSM 2834 / JCM 12185 / C2A).